Consider the following 523-residue polypeptide: DELLA protein RGL3 (523 aa).

Residues M1–G28 are disordered. A DELLA motif motif is present at residues D34–A38. An LEXLE motif motif is present at residues L56–E60. Residues V78–P82 carry the VHYNP motif motif. One can recognise a GRAS domain in the interval V148–K516. Positions V155–I209 are leucine repeat I (LRI). A VHIID region spans residues Q228–G293. Positions V259–D263 match the VHIID motif. Residues E305–D337 form a leucine repeat II (LRII) region. The tract at residues L348–N437 is PFYRE. Positions L356–L360 match the LXXLL motif motif. An SAW region spans residues A440–K516.

This sequence belongs to the GRAS family. DELLA subfamily. In terms of assembly, interacts directly with the GID2/SLY1 component of the SCF(GID2) complex, suggesting that it may be ubiquitinated. Interacts (via N-terminus) with GID1A, GID1B and GID1B (via N-terminus). Interacts with the BOI proteins BOI, BRG1, BRG2 and BRG3. In terms of processing, phosphorylated. Post-translationally, may be ubiquitinated. In terms of tissue distribution, expressed at very low level. Mainly expressed in germinating seeds and flowers and siliques. Not expressed in other tissues.

It is found in the nucleus. Its function is as follows. Probable transcriptional regulator that acts as a repressor of the gibberellin (GA) signaling pathway. No effect of the BOI proteins on its stability. Probably acts by participating in large multiprotein complexes that repress transcription of GA-inducible genes. Its activity may be regulated by phytohormones such as auxin and ethylene. This chain is DELLA protein RGL3 (RGL3), found in Arabidopsis thaliana (Mouse-ear cress).